A 92-amino-acid polypeptide reads, in one-letter code: Probable Fe(2+)-trafficking protein (92 aa).

The protein belongs to the Fe(2+)-trafficking protein family.

Could be a mediator in iron transactions between iron acquisition and iron-requiring processes, such as synthesis and/or repair of Fe-S clusters in biosynthetic enzymes. The chain is Probable Fe(2+)-trafficking protein from Shewanella loihica (strain ATCC BAA-1088 / PV-4).